A 185-amino-acid polypeptide reads, in one-letter code: Elongation factor P (185 aa).

Belongs to the elongation factor P family.

It is found in the cytoplasm. The protein operates within protein biosynthesis; polypeptide chain elongation. Involved in peptide bond synthesis. Stimulates efficient translation and peptide-bond synthesis on native or reconstituted 70S ribosomes in vitro. Probably functions indirectly by altering the affinity of the ribosome for aminoacyl-tRNA, thus increasing their reactivity as acceptors for peptidyl transferase. The polypeptide is Elongation factor P (Nitrosomonas europaea (strain ATCC 19718 / CIP 103999 / KCTC 2705 / NBRC 14298)).